The following is a 992-amino-acid chain: Presequence protease, mitochondrial (992 aa).

The transit peptide at 1 to 30 (MNYAKLSIAFSKKTIKTHNCRLFQRWLHVG) directs the protein to the mitochondrion. His91 provides a ligand contact to Zn(2+). Glu94 (proton acceptor) is an active-site residue. His95 serves as a coordination point for Zn(2+). The active site involves Glu167. Glu192 is a binding site for Zn(2+).

It belongs to the peptidase M16 family. PreP subfamily. As to quaternary structure, monomer and homodimer; homodimerization is induced by binding of the substrate. Requires Zn(2+) as cofactor.

It localises to the mitochondrion intermembrane space. It is found in the mitochondrion matrix. Functionally, degrades mitochondrial transit peptides after their cleavage in the intermembrane space or in the matrix, and presequence peptides; clearance of these peptides is required to keep the presequence processing machinery running. Preferentially cleaves the N-terminal side of paired basic amino acid residues. Also degrades other unstructured peptides. May function as an ATP-dependent peptidase as opposed to a metalloendopeptidase. This Schizosaccharomyces pombe (strain 972 / ATCC 24843) (Fission yeast) protein is Presequence protease, mitochondrial (cym1).